Here is a 776-residue protein sequence, read N- to C-terminus: Glutathione biosynthesis bifunctional protein GshAB (776 aa).

The segment at 1–354 (MIKLDMTILD…QLADENENNI (354 aa)) is glutamate--cysteine ligase. In terms of domain architecture, ATP-grasp spans 521 to 775 (KLVLAENNIR…IGDKILDFLF (255 aa)). Position 548 to 606 (548 to 606 (SLFKDKQIVVKPKSTNYGWGISIFKNKFTTEDYQEALNIAFSYDSSVIIEEFIPGDEFR)) interacts with ATP. Positions 728, 745, and 747 each coordinate Mg(2+). Positions 728, 745, and 747 each coordinate Mn(2+).

It in the N-terminal section; belongs to the glutamate--cysteine ligase type 1 family. Type 2 subfamily. As to quaternary structure, monomer. Requires Mg(2+) as cofactor. It depends on Mn(2+) as a cofactor.

It carries out the reaction L-cysteine + L-glutamate + ATP = gamma-L-glutamyl-L-cysteine + ADP + phosphate + H(+). It catalyses the reaction gamma-L-glutamyl-L-cysteine + glycine + ATP = glutathione + ADP + phosphate + H(+). It participates in sulfur metabolism; glutathione biosynthesis; glutathione from L-cysteine and L-glutamate: step 1/2. The protein operates within sulfur metabolism; glutathione biosynthesis; glutathione from L-cysteine and L-glutamate: step 2/2. In terms of biological role, synthesizes glutathione from L-glutamate and L-cysteine via gamma-L-glutamyl-L-cysteine. The protein is Glutathione biosynthesis bifunctional protein GshAB of Listeria welshimeri serovar 6b (strain ATCC 35897 / DSM 20650 / CCUG 15529 / CIP 8149 / NCTC 11857 / SLCC 5334 / V8).